A 154-amino-acid polypeptide reads, in one-letter code: 6,7-dimethyl-8-ribityllumazine synthase (154 aa).

5-amino-6-(D-ribitylamino)uracil contacts are provided by residues phenylalanine 23, 57-59 (AFE), and 81-83 (AVI). Residue 86 to 87 (ST) coordinates (2S)-2-hydroxy-3-oxobutyl phosphate. Histidine 89 serves as the catalytic Proton donor. Residue phenylalanine 114 coordinates 5-amino-6-(D-ribitylamino)uracil. Arginine 128 provides a ligand contact to (2S)-2-hydroxy-3-oxobutyl phosphate.

This sequence belongs to the DMRL synthase family.

The enzyme catalyses (2S)-2-hydroxy-3-oxobutyl phosphate + 5-amino-6-(D-ribitylamino)uracil = 6,7-dimethyl-8-(1-D-ribityl)lumazine + phosphate + 2 H2O + H(+). The protein operates within cofactor biosynthesis; riboflavin biosynthesis; riboflavin from 2-hydroxy-3-oxobutyl phosphate and 5-amino-6-(D-ribitylamino)uracil: step 1/2. Catalyzes the formation of 6,7-dimethyl-8-ribityllumazine by condensation of 5-amino-6-(D-ribitylamino)uracil with 3,4-dihydroxy-2-butanone 4-phosphate. This is the penultimate step in the biosynthesis of riboflavin. The polypeptide is 6,7-dimethyl-8-ribityllumazine synthase (Campylobacter jejuni subsp. jejuni serotype O:2 (strain ATCC 700819 / NCTC 11168)).